The sequence spans 363 residues: RNA exonuclease NGL1 (363 aa).

A mitochondrion-targeting transit peptide spans 1 to 23 (MFTRRFIPVVQSTKQNIGKYVRK).

Belongs to the CCR4/nocturin family.

The protein localises to the mitochondrion. The chain is RNA exonuclease NGL1 (NGL1) from Saccharomyces cerevisiae (strain ATCC 204508 / S288c) (Baker's yeast).